Consider the following 381-residue polypeptide: Cytochrome b (381 aa).

4 consecutive transmembrane segments (helical) span residues 34–54 (FGSL…FLAM), 78–99 (WLIR…YLHI), 114–134 (WNIG…GYVL), and 179–199 (FFAF…IHLL). Heme b is bound by residues H84 and H98. Residues H183 and H197 each coordinate heme b. H202 contacts a ubiquinone. A run of 4 helical transmembrane segments spans residues 227-247 (YKDL…ALFM), 289-309 (LGGV…PLLH), 321-341 (LTQI…WIGG), and 348-368 (FITV…IIMP).

Belongs to the cytochrome b family. In terms of assembly, the cytochrome bc1 complex contains 3 respiratory subunits (MT-CYB, CYC1 and UQCRFS1), 2 core proteins (UQCRC1 and UQCRC2) and probably 6 low-molecular weight proteins. It depends on heme b as a cofactor.

Its subcellular location is the mitochondrion inner membrane. Its function is as follows. Component of the ubiquinol-cytochrome c reductase complex (complex III or cytochrome b-c1 complex) that is part of the mitochondrial respiratory chain. The b-c1 complex mediates electron transfer from ubiquinol to cytochrome c. Contributes to the generation of a proton gradient across the mitochondrial membrane that is then used for ATP synthesis. The sequence is that of Cytochrome b (mt-cyb) from Sphyrna tiburo vespertina (Pacific bonnethead shark).